The primary structure comprises 147 residues: Protein-export protein SecB (147 aa).

This sequence belongs to the SecB family. In terms of assembly, homotetramer, a dimer of dimers. One homotetramer interacts with 1 SecA dimer.

It localises to the cytoplasm. In terms of biological role, one of the proteins required for the normal export of preproteins out of the cell cytoplasm. It is a molecular chaperone that binds to a subset of precursor proteins, maintaining them in a translocation-competent state. It also specifically binds to its receptor SecA. The sequence is that of Protein-export protein SecB from Neisseria meningitidis serogroup A / serotype 4A (strain DSM 15465 / Z2491).